The primary structure comprises 501 residues: ATP synthase subunit alpha, chloroplastic (501 aa).

170–177 contributes to the ATP binding site; sequence GDRQTGKT.

The protein belongs to the ATPase alpha/beta chains family. F-type ATPases have 2 components, CF(1) - the catalytic core - and CF(0) - the membrane proton channel. CF(1) has five subunits: alpha(3), beta(3), gamma(1), delta(1), epsilon(1). CF(0) has four main subunits: a, b, b' and c.

The protein resides in the plastid. Its subcellular location is the chloroplast thylakoid membrane. The catalysed reaction is ATP + H2O + 4 H(+)(in) = ADP + phosphate + 5 H(+)(out). Produces ATP from ADP in the presence of a proton gradient across the membrane. The alpha chain is a regulatory subunit. The polypeptide is ATP synthase subunit alpha, chloroplastic (Nephroselmis olivacea (Green alga)).